Consider the following 726-residue polypeptide: Catalase-peroxidase 1 (726 aa).

The segment at 1–33 is disordered; it reads MSTSDDIHNTTATGKCPFHQGGHDQSAGAGTTT. The segment at residues 105 to 226 is a cross-link (tryptophyl-tyrosyl-methioninium (Trp-Tyr) (with M-252)); sequence WHGAGTYRSI…LGATEMGLIY (122 aa). Residue His-106 is the Proton acceptor of the active site. A cross-link (tryptophyl-tyrosyl-methioninium (Tyr-Met) (with W-105)) is located at residues 226-252; it reads YVNPEGPDHSGEPLSAAAAIRATFGNM. Residue His-267 participates in heme b binding.

It belongs to the peroxidase family. Peroxidase/catalase subfamily. As to quaternary structure, homodimer or homotetramer. It depends on heme b as a cofactor. Formation of the three residue Trp-Tyr-Met cross-link is important for the catalase, but not the peroxidase activity of the enzyme.

It catalyses the reaction H2O2 + AH2 = A + 2 H2O. The enzyme catalyses 2 H2O2 = O2 + 2 H2O. Its function is as follows. Bifunctional enzyme with both catalase and broad-spectrum peroxidase activity. The polypeptide is Catalase-peroxidase 1 (Escherichia coli O157:H7).